We begin with the raw amino-acid sequence, 179 residues long: Peptide deformylase (179 aa).

2 residues coordinate Fe cation: Cys-102 and His-144. The active site involves Glu-145. His-148 serves as a coordination point for Fe cation.

It belongs to the polypeptide deformylase family. The cofactor is Fe(2+).

It carries out the reaction N-terminal N-formyl-L-methionyl-[peptide] + H2O = N-terminal L-methionyl-[peptide] + formate. Removes the formyl group from the N-terminal Met of newly synthesized proteins. Requires at least a dipeptide for an efficient rate of reaction. N-terminal L-methionine is a prerequisite for activity but the enzyme has broad specificity at other positions. In Wolbachia sp. subsp. Brugia malayi (strain TRS), this protein is Peptide deformylase.